Here is a 439-residue protein sequence, read N- to C-terminus: Fibroleukin (439 aa).

The first 23 residues, 1–23 (MKLANWYWLSSAVLATYGFLVVA), serve as a signal peptide directing secretion. Residue Asn-25 is glycosylated (N-linked (GlcNAc...) asparagine). Positions 73-165 (SRIEEVFKEV…GRLEKLNLVN (93 aa)) form a coiled coil. A disordered region spans residues 103–126 (ADDNGDPGRNGLLLPSTGAPGEVG). Residues Asn-179, Asn-235, Asn-263, and Asn-336 are each glycosylated (N-linked (GlcNAc...) asparagine). Residues 204–436 (PVQHLIYKDC…EAKMMIRPKH (233 aa)) form the Fibrinogen C-terminal domain. Cysteines 213 and 242 form a disulfide. A disulfide bond links Cys-371 and Cys-384.

As to quaternary structure, homotetramer; disulfide-linked. In terms of tissue distribution, constitutively expressed in cytotoxic T-cells.

It localises to the secreted. May play a role in physiologic lymphocyte functions at mucosal sites. The sequence is that of Fibroleukin (FGL2) from Homo sapiens (Human).